A 98-amino-acid polypeptide reads, in one-letter code: NADH-ubiquinone oxidoreductase chain 4L (98 aa).

The next 3 membrane-spanning stretches (helical) occupy residues 1 to 21 (MSMVYANIFLAFIMSLMGLLM), 29 to 49 (SLLCLEGMMLSLFVMMTVTIL), and 61 to 81 (IILLVFAACEAALGLLLLVMV).

Belongs to the complex I subunit 4L family. Core subunit of respiratory chain NADH dehydrogenase (Complex I) which is composed of 45 different subunits.

It is found in the mitochondrion inner membrane. It carries out the reaction a ubiquinone + NADH + 5 H(+)(in) = a ubiquinol + NAD(+) + 4 H(+)(out). In terms of biological role, core subunit of the mitochondrial membrane respiratory chain NADH dehydrogenase (Complex I) which catalyzes electron transfer from NADH through the respiratory chain, using ubiquinone as an electron acceptor. Part of the enzyme membrane arm which is embedded in the lipid bilayer and involved in proton translocation. The sequence is that of NADH-ubiquinone oxidoreductase chain 4L (MT-ND4L) from Pusa hispida (Ringed seal).